The chain runs to 1763 residues: Non-reducing polyketide synthase PKS19 (1763 aa).

The N-terminal acylcarrier protein transacylase domain (SAT) stretch occupies residues G20–H261. One can recognise a Ketosynthase family 3 (KS3) domain in the interval S390–E822. Catalysis depends on for beta-ketoacyl synthase activity residues C561, H696, and H740. The segment at F922 to L1227 is malonyl-CoA:ACP transacylase (MAT) domain. An N-terminal hotdog fold region spans residues H1307 to L1439. The 303-residue stretch at H1307–N1609 folds into the PKS/mFAS DH domain. Residues G1334–G1588 form a product template (PT) domain region. Residue H1339 is the Proton acceptor; for dehydratase activity of the active site. The interval V1461–N1609 is C-terminal hotdog fold. D1522 functions as the Proton donor; for dehydratase activity in the catalytic mechanism. The interval A1619–G1690 is disordered. A compositionally biased stretch (basic residues) spans P1635–P1647. Residues A1689–R1763 enclose the Carrier domain. S1726 is subject to O-(pantetheine 4'-phosphoryl)serine.

In terms of biological role, non-reducing polyketide synthase that mediates the biosynthesis of alternariol (AOH), a micotoxin that seems not to be involved in virulence and oxidative stress tolerance. PKS19 alone is sufficient for AOH synthesis which is initiated by priming with acetyl-CoA, followed by sequential condensations of 6 malonyl-CoA units. The chain is Non-reducing polyketide synthase PKS19 from Phaeosphaeria nodorum (strain SN15 / ATCC MYA-4574 / FGSC 10173) (Glume blotch fungus).